The primary structure comprises 215 residues: Nascent polypeptide-associated complex subunit alpha (215 aa).

The interval 1–81 (MPGEATDTVP…SEKKARKAMS (81 aa)) is disordered. Residues 9–28 (VPATEQELPQPQAETGSGTE) are compositionally biased toward polar residues. A compositionally biased stretch (acidic residues) spans 29-42 (SDSDESVPELEEQD). Serine 43 is modified (phosphoserine; by ILK1). A compositionally biased stretch (low complexity) spans 44–57 (TQATTQQAQLAAAA). The interval 69 to 80 (QSRSEKKARKAM) is required for DNA-binding. Residues 70-135 (SRSEKKARKA…AKIEDLSQQA (66 aa)) form the NAC-A/B domain. An RNA/DNA-binding region spans residues 93–108 (RVTIRKSKNILFVITK). At serine 132 the chain carries Phosphoserine. Lysine 142 carries the post-translational modification N6-acetyllysine; alternate. A Glycyl lysine isopeptide (Lys-Gly) (interchain with G-Cter in SUMO2); alternate cross-link involves residue lysine 142. At threonine 159 the chain carries Phosphothreonine; by GSK3-beta. A Phosphothreonine modification is found at threonine 161. Phosphoserine is present on residues serine 166, serine 186, serine 191, and serine 203. The region spanning 176-213 (VEVKDIELVMSQANVSRAKAVRALKNNSNDIVNAIMEL) is the UBA domain.

It belongs to the NAC-alpha family. As to quaternary structure, part of the nascent polypeptide-associated complex (NAC), which is a heterodimer of NACA and BTF3 (via NAC-A/B domains). NAC associates with ribosomes through the BTF3/NACB subunit and contacts the ribosomal protein L23, which is positioned near the exiting site. Both subunits can contact nascent polypeptide chains. NACA may also form homodimers, and only this form binds DNA. Interacts with TBP and JUN. Phosphorylation of Ser-43 by ILK during cell adhesion may promote nuclear localization. Phosphorylation of Thr-159 by GSK3B may promote proteasome mediated degradation.

It is found in the cytoplasm. The protein resides in the nucleus. In terms of biological role, prevents inappropriate targeting of non-secretory polypeptides to the endoplasmic reticulum (ER). Binds to nascent polypeptide chains as they emerge from the ribosome and blocks their interaction with the signal recognition particle (SRP), which normally targets nascent secretory peptides to the ER. Also reduces the inherent affinity of ribosomes for protein translocation sites in the ER membrane (M sites). May act as a specific coactivator for JUN, binding to DNA and stabilizing the interaction of JUN homodimers with target gene promoters. The sequence is that of Nascent polypeptide-associated complex subunit alpha (NACA) from Bos taurus (Bovine).